A 49-amino-acid chain; its full sequence is Large ribosomal subunit protein bL33B (49 aa).

It belongs to the bacterial ribosomal protein bL33 family.

This chain is Large ribosomal subunit protein bL33B, found in Geobacillus kaustophilus (strain HTA426).